Reading from the N-terminus, the 437-residue chain is Glutamyl-tRNA reductase (437 aa).

Residues 49 to 52, serine 109, 114 to 116, and glutamine 120 contribute to the substrate site; these read TCNR and ETQ. The Nucleophile role is filled by cysteine 50. An NADP(+)-binding site is contributed by 189–194; sequence GAGEMS.

Belongs to the glutamyl-tRNA reductase family. As to quaternary structure, homodimer.

The enzyme catalyses (S)-4-amino-5-oxopentanoate + tRNA(Glu) + NADP(+) = L-glutamyl-tRNA(Glu) + NADPH + H(+). It functions in the pathway porphyrin-containing compound metabolism; protoporphyrin-IX biosynthesis; 5-aminolevulinate from L-glutamyl-tRNA(Glu): step 1/2. Catalyzes the NADPH-dependent reduction of glutamyl-tRNA(Glu) to glutamate 1-semialdehyde (GSA). The protein is Glutamyl-tRNA reductase of Listeria welshimeri serovar 6b (strain ATCC 35897 / DSM 20650 / CCUG 15529 / CIP 8149 / NCTC 11857 / SLCC 5334 / V8).